Reading from the N-terminus, the 1032-residue chain is Exportin-T (1032 aa).

Belongs to the exportin family.

It localises to the nucleus. The protein resides in the cytoplasm. Functionally, tRNA nucleus export receptor which facilitates tRNA translocation across the nuclear pore complex. Involved in pre-tRNA splicing, probably by affecting the interaction of pre-tRNA with splicing endonuclease. The sequence is that of Exportin-T (los1) from Aspergillus fumigatus (strain ATCC MYA-4609 / CBS 101355 / FGSC A1100 / Af293) (Neosartorya fumigata).